The following is a 62-amino-acid chain: Large ribosomal subunit protein bL28 (62 aa).

Residues 1–27 (MARECYITGRKARSGNKRSHAMNKSKR) form a disordered region. The span at 10-27 (RKARSGNKRSHAMNKSKR) shows a compositional bias: basic residues.

The protein belongs to the bacterial ribosomal protein bL28 family.

The chain is Large ribosomal subunit protein bL28 from Shouchella clausii (strain KSM-K16) (Alkalihalobacillus clausii).